We begin with the raw amino-acid sequence, 144 residues long: Bacilliredoxin BH1716 (144 aa).

Belongs to the bacilliredoxin family.

The protein is Bacilliredoxin BH1716 of Halalkalibacterium halodurans (strain ATCC BAA-125 / DSM 18197 / FERM 7344 / JCM 9153 / C-125) (Bacillus halodurans).